The following is a 143-amino-acid chain: Putative acyl carrier protein phosphodiesterase (143 aa).

This sequence belongs to the AcpH family.

It carries out the reaction holo-[ACP] + H2O = apo-[ACP] + (R)-4'-phosphopantetheine + H(+). Its function is as follows. Converts holo-ACP to apo-ACP by hydrolytic cleavage of the phosphopantetheine prosthetic group from ACP. This chain is Putative acyl carrier protein phosphodiesterase (acpH), found in Shigella flexneri.